The following is an 84-amino-acid chain: Cell division topological specificity factor (84 aa).

This sequence belongs to the MinE family.

Its function is as follows. Prevents the cell division inhibition by proteins MinC and MinD at internal division sites while permitting inhibition at polar sites. This ensures cell division at the proper site by restricting the formation of a division septum at the midpoint of the long axis of the cell. This chain is Cell division topological specificity factor, found in Pseudomonas aeruginosa (strain LESB58).